The sequence spans 103 residues: Small ribosomal subunit protein eS24 (103 aa).

It belongs to the eukaryotic ribosomal protein eS24 family.

This is Small ribosomal subunit protein eS24 from Methanococcus maripaludis (strain C6 / ATCC BAA-1332).